Here is a 240-residue protein sequence, read N- to C-terminus: Ubiquinone biosynthesis O-methyltransferase (240 aa).

S-adenosyl-L-methionine is bound by residues Arg-36, Gly-60, Asp-81, and Leu-123.

Belongs to the methyltransferase superfamily. UbiG/COQ3 family.

It catalyses the reaction a 3-demethylubiquinol + S-adenosyl-L-methionine = a ubiquinol + S-adenosyl-L-homocysteine + H(+). It carries out the reaction a 3-(all-trans-polyprenyl)benzene-1,2-diol + S-adenosyl-L-methionine = a 2-methoxy-6-(all-trans-polyprenyl)phenol + S-adenosyl-L-homocysteine + H(+). The protein operates within cofactor biosynthesis; ubiquinone biosynthesis. Functionally, O-methyltransferase that catalyzes the 2 O-methylation steps in the ubiquinone biosynthetic pathway. The chain is Ubiquinone biosynthesis O-methyltransferase from Rickettsia bellii (strain OSU 85-389).